We begin with the raw amino-acid sequence, 274 residues long: Protein FAM210A (274 aa).

Positions 51 to 66 (KWLHSQPKQQDSSTKT) are enriched in polar residues. A disordered region spans residues 51–91 (KWLHSQPKQQDSSTKTPVHDLPSGSQHQSEESSPSAKSSIS). Positions 81–91 (ESSPSAKSSIS) are enriched in low complexity. Residues 105–217 (DQSIGLLKRF…GYLSTPPLVK (113 aa)) enclose the DUF1279 domain. A helical transmembrane segment spans residues 124–144 (VLIPVHLVTSSFWFGSFYYAA). Residues 221–274 (QDRMEETKELFTEKMEETRDIISGKMEETKDRISEKLQETKDRVAFRKKKNEEM) are a coiled coil.

The protein belongs to the FAM210 family.

It localises to the membrane. The protein localises to the mitochondrion. The protein resides in the cytoplasm. Its function is as follows. May play a role in the structure and strength of both muscle and bone. This is Protein FAM210A (fam210a) from Xenopus tropicalis (Western clawed frog).